Reading from the N-terminus, the 227-residue chain is Lipoprotein-releasing system ATP-binding protein LolD (227 aa).

In terms of domain architecture, ABC transporter spans 7-227 (LQLTGVERHY…TISDGKIVDF (221 aa)). 43–50 (APSGTGKS) contributes to the ATP binding site.

The protein belongs to the ABC transporter superfamily. Lipoprotein translocase (TC 3.A.1.125) family. The complex is composed of two ATP-binding proteins (LolD) and two transmembrane proteins (LolC and LolE).

Its subcellular location is the cell inner membrane. Functionally, part of the ABC transporter complex LolCDE involved in the translocation of mature outer membrane-directed lipoproteins, from the inner membrane to the periplasmic chaperone, LolA. Responsible for the formation of the LolA-lipoprotein complex in an ATP-dependent manner. This Rhizobium johnstonii (strain DSM 114642 / LMG 32736 / 3841) (Rhizobium leguminosarum bv. viciae) protein is Lipoprotein-releasing system ATP-binding protein LolD.